Reading from the N-terminus, the 197-residue chain is MTSLYLASGSPRRQELLAQLGVTFERIVTGIEEQRQPQESAQQYVVRLAREKARAGVAQTAKDLPVLGADTIVILNGEVLEKPRDAEHAAQMLRKLSGQTHQVMTAVALADSRHILDCLVVTDVTFRTLTDEDIAGYVASGEPLDKAGAYGIQGLGGCFVRKINGSYQAVVGLPLVETYELLSNFNALREKRDKHDG.

The active-site Proton acceptor is Asp70.

This sequence belongs to the Maf family. YhdE subfamily. It depends on a divalent metal cation as a cofactor.

The protein resides in the cytoplasm. It carries out the reaction dTTP + H2O = dTMP + diphosphate + H(+). The enzyme catalyses UTP + H2O = UMP + diphosphate + H(+). In terms of biological role, nucleoside triphosphate pyrophosphatase that hydrolyzes dTTP and UTP. May have a dual role in cell division arrest and in preventing the incorporation of modified nucleotides into cellular nucleic acids. In Escherichia coli O157:H7, this protein is dTTP/UTP pyrophosphatase (yhdE).